A 683-amino-acid chain; its full sequence is E3 ubiquitin-protein ligase RNF103 (683 aa).

The next 4 helical transmembrane spans lie at 6–26 (FFLL…EAIV), 326–346 (LFVL…FITQ), 366–386 (LLII…LDSF), and 411–431 (MFYT…GLLI). The segment covering 525 to 542 (EEMSESSQDTENDSDSDN) has biased composition (acidic residues). The disordered stretch occupies residues 525-548 (EEMSESSQDTENDSDSDNMDTFSS). The segment at 619 to 661 (CVVCLENFENGCLLMGLPCGHVFHQNCIVMWLAGGRHCCPVCR) adopts an RING-type zinc-finger fold.

In terms of assembly, interacts with DERL1 and VCP. In terms of tissue distribution, highly expressed in the normal cerebellum but not in the cerebral cortex.

It localises to the endoplasmic reticulum membrane. The catalysed reaction is S-ubiquitinyl-[E2 ubiquitin-conjugating enzyme]-L-cysteine + [acceptor protein]-L-lysine = [E2 ubiquitin-conjugating enzyme]-L-cysteine + N(6)-ubiquitinyl-[acceptor protein]-L-lysine.. The protein operates within protein modification; protein ubiquitination. Acts as an E2-dependent E3 ubiquitin-protein ligase, probably involved in the ER-associated protein degradation pathway. In Mus musculus (Mouse), this protein is E3 ubiquitin-protein ligase RNF103 (Rnf103).